The following is a 218-amino-acid chain: Small ribosomal subunit protein uS3 (218 aa).

Position 1 is an N-acetylmethionine (Met1). Residues 23-95 (LNELFTREFN…TVVLFAEKIL (73 aa)) enclose the KH type-2 domain.

The protein belongs to the universal ribosomal protein uS3 family.

This is Small ribosomal subunit protein uS3 (rps3) from Dictyostelium discoideum (Social amoeba).